The primary structure comprises 539 residues: CTP synthase (539 aa).

The interval 1 to 268 is amidoligase domain; that stretch reads MADTKYIFVT…DETVLRKVGL (268 aa). Position 15 (Ser15) interacts with CTP. Ser15 is a binding site for UTP. Residue 16-21 coordinates ATP; the sequence is SLGKGI. Tyr56 contributes to the L-glutamine binding site. Asp73 contacts ATP. Mg(2+) is bound by residues Asp73 and Glu143. CTP contacts are provided by residues 150–152, 189–194, and Lys225; these read DIE and KTKPTQ. Residues 189–194 and Lys225 each bind UTP; that span reads KTKPTQ. A Glutamine amidotransferase type-1 domain is found at 294 to 536; it reads TIALVGKYVE…IREAIKTRKK (243 aa). Gly356 lines the L-glutamine pocket. Cys383 (nucleophile; for glutamine hydrolysis) is an active-site residue. L-glutamine is bound by residues 384–387, Glu407, and Arg464; that span reads LGMQ. Active-site residues include His509 and Glu511.

It belongs to the CTP synthase family. Homotetramer.

The enzyme catalyses UTP + L-glutamine + ATP + H2O = CTP + L-glutamate + ADP + phosphate + 2 H(+). It carries out the reaction L-glutamine + H2O = L-glutamate + NH4(+). It catalyses the reaction UTP + NH4(+) + ATP = CTP + ADP + phosphate + 2 H(+). Its pathway is pyrimidine metabolism; CTP biosynthesis via de novo pathway; CTP from UDP: step 2/2. Its activity is regulated as follows. Allosterically activated by GTP, when glutamine is the substrate; GTP has no effect on the reaction when ammonia is the substrate. The allosteric effector GTP functions by stabilizing the protein conformation that binds the tetrahedral intermediate(s) formed during glutamine hydrolysis. Inhibited by the product CTP, via allosteric rather than competitive inhibition. Catalyzes the ATP-dependent amination of UTP to CTP with either L-glutamine or ammonia as the source of nitrogen. Regulates intracellular CTP levels through interactions with the four ribonucleotide triphosphates. In Porphyromonas gingivalis (strain ATCC 33277 / DSM 20709 / CIP 103683 / JCM 12257 / NCTC 11834 / 2561), this protein is CTP synthase.